The chain runs to 536 residues: Phosphoenolpyruvate carboxykinase (ATP) (536 aa).

Substrate-binding residues include Arg-61, Tyr-195, and Lys-201. ATP-binding positions include Lys-201, His-220, and Gly-236–Thr-244. 2 residues coordinate Mn(2+): Lys-201 and His-220. Mn(2+) is bound at residue Asp-257. Residues Glu-285, Arg-322, and Thr-447 each contribute to the ATP site. A substrate-binding site is contributed by Arg-322.

Belongs to the phosphoenolpyruvate carboxykinase (ATP) family. Requires Mn(2+) as cofactor.

Its subcellular location is the cytoplasm. The catalysed reaction is oxaloacetate + ATP = phosphoenolpyruvate + ADP + CO2. The protein operates within carbohydrate biosynthesis; gluconeogenesis. In terms of biological role, involved in the gluconeogenesis. Catalyzes the conversion of oxaloacetate (OAA) to phosphoenolpyruvate (PEP) through direct phosphoryl transfer between the nucleoside triphosphate and OAA. This chain is Phosphoenolpyruvate carboxykinase (ATP), found in Rhizobium etli (strain CIAT 652).